Reading from the N-terminus, the 243-residue chain is Putative ABC transporter arginine-binding protein 2 (243 aa).

Residues Met-1 to Ala-19 form the signal peptide.

It belongs to the bacterial solute-binding protein 3 family. The complex is composed of two ATP-binding proteins (ArtP), two transmembrane proteins (ArtM and ArtQ) and two solute-binding proteins (ArtJ and ArtI).

It localises to the periplasm. Its function is as follows. Part of the ABC transporter complex ArtPIQMJ involved in arginine transport. This Escherichia coli (strain K12) protein is Putative ABC transporter arginine-binding protein 2 (artI).